The chain runs to 257 residues: PHD finger protein Alfin1 (257 aa).

A disordered region spans residues 145-200; the sequence is SKDQLTAHNNGSNSKYKSSGKSRQSESQTKGVKMSAPVKEEVDSGEEEEEDDDEQG. Low complexity predominate over residues 153–166; the sequence is NNGSNSKYKSSGKS. Positions 187–199 are enriched in acidic residues; sequence DSGEEEEEDDDEQ. Residues 200–252 form a PHD-type zinc finger; that stretch reads GATCGACGDNYGTDEFWICCDMCEKWFHGKCVKITPAKAEHIKQYKCPGCSIK.

Belongs to the Alfin family. In terms of assembly, interacts with H3K4me3 and to a lesser extent with H3K4me2. As to expression, predominantly expressed in the roots.

The protein localises to the nucleus. Functionally, histone-binding component that specifically recognizes H3 tails trimethylated on 'Lys-4' (H3K4me3), which mark transcription start sites of virtually all active genes. Transcriptional regulator that binds specifically to DNA sequences 5'-GNGGTG-3' or 5'-GTGGNG-3', including promoter elements of the salt-inducible PRP2 gene. Plays a role in salinity tolerance. The sequence is that of PHD finger protein Alfin1 (ALFIN-1) from Medicago sativa (Alfalfa).